Consider the following 390-residue polypeptide: Putative nickel insertion protein (390 aa).

The protein belongs to the LarC family.

The protein is Putative nickel insertion protein of Geobacter metallireducens (strain ATCC 53774 / DSM 7210 / GS-15).